Consider the following 68-residue polypeptide: DNA-directed RNA polymerase subunit omega (68 aa).

The protein belongs to the RNA polymerase subunit omega family. As to quaternary structure, the RNAP catalytic core consists of 2 alpha, 1 beta, 1 beta' and 1 omega subunit. When a sigma factor is associated with the core the holoenzyme is formed, which can initiate transcription.

The catalysed reaction is RNA(n) + a ribonucleoside 5'-triphosphate = RNA(n+1) + diphosphate. Its function is as follows. Promotes RNA polymerase assembly. Latches the N- and C-terminal regions of the beta' subunit thereby facilitating its interaction with the beta and alpha subunits. This is DNA-directed RNA polymerase subunit omega from Persephonella marina (strain DSM 14350 / EX-H1).